Here is a 321-residue protein sequence, read N- to C-terminus: Probable E3 ubiquitin-protein ligase BAH1-like 1 (321 aa).

Residues 1–149 (MKFAKKYEKY…YSKQGQEFKA (149 aa)) enclose the SPX domain. Residues 217 to 266 (CSICLDTVFDPVALSCGHIYCYLCSCSAASVTIVDGLKSAERKSKCPLCR) form an RING-type zinc finger.

The protein belongs to the RING-type zinc finger family.

The enzyme catalyses S-ubiquitinyl-[E2 ubiquitin-conjugating enzyme]-L-cysteine + [acceptor protein]-L-lysine = [E2 ubiquitin-conjugating enzyme]-L-cysteine + N(6)-ubiquitinyl-[acceptor protein]-L-lysine.. Its pathway is protein modification; protein ubiquitination. The sequence is that of Probable E3 ubiquitin-protein ligase BAH1-like 1 from Oryza sativa subsp. indica (Rice).